We begin with the raw amino-acid sequence, 424 residues long: Zinc metalloproteinase-disintegrin-like brevilysin H2b (424 aa).

Residue Gln1 is modified to Pyrrolidone carboxylic acid. Residues Arg9 to Pro207 enclose the Peptidase M12B domain. A glycan (N-linked (GlcNAc...) asparagine) is linked at Asn69. Asp96 serves as a coordination point for Ca(2+). Intrachain disulfides connect Cys120-Cys202, Cys164-Cys186, and Cys166-Cys169. A Zn(2+)-binding site is contributed by His145. Glu146 is a catalytic residue. Zn(2+) contacts are provided by His149 and His155. Asn185 carries an N-linked (GlcNAc...) asparagine glycan. Residues Cys202, Asn205, Val217, Asn220, Leu222, Glu224, Glu227, and Asp230 each contribute to the Ca(2+) site. In terms of domain architecture, Disintegrin spans Pro215–Asn301. 14 cysteine pairs are disulfide-bonded: Cys218–Cys247, Cys229–Cys242, Cys231–Cys237, Cys241–Cys264, Cys255–Cys261, Cys260–Cys286, Cys273–Cys293, Cys280–Cys312, Cys305–Cys317, Cys324–Cys374, Cys339–Cys385, Cys352–Cys362, Cys369–Cys411, and Cys405–Cys417. A D/ECD-tripeptide motif is present at residues Asp279 to Asp281. Ca(2+) is bound by residues Asp281, Glu284, and Asp296.

The protein belongs to the venom metalloproteinase (M12B) family. P-III subfamily. P-IIIa sub-subfamily. Monomer. Zn(2+) serves as cofactor. Post-translationally, glycosylated. In terms of tissue distribution, expressed by the venom gland.

It is found in the secreted. Its activity is regulated as follows. Its proteolytic activity is inhibited by EDTA, TPEN, 1,10-phenanthroline, and some thiol compounds, but is enhanced by alkaline earth metal ions (Mg2+, Ca2+, Sr2+, and Ba2+). Its activity is not modulated by urea (4 M). Its function is as follows. Non-hemorrhagic metalloproteinase that degrades fibrinogen. The alpha chain (FGA) is rapidly degraded, the beta chain (FGB) is degraded very slowly, while the gamma chain is left intact. Shows a prefential cleavage at X-Leu bonds. Cleaves insulin B chain at '29-His-|-Leu-30', '33-Ser-|-His-34', '38-Ala-|-Leu-39' and '40-Tyr-|-Leu-41' bonds. The protein is Zinc metalloproteinase-disintegrin-like brevilysin H2b of Gloydius brevicauda (Korean slamosa snake).